Here is a 272-residue protein sequence, read N- to C-terminus: MMACHC-like protein (272 aa).

Residues aspartate 121, 132–135 (ILMQ), and 146–148 (YYQ) contribute to the substrate site.

This sequence belongs to the MMACHC family. FAD serves as cofactor. FMN is required as a cofactor.

Its subcellular location is the cytoplasm. Catalyzes the reductive dealkylation of cyanocobalamin to cob(II)alamin, using FAD or FMN as cofactor and NADPH as cosubstrate. Can also catalyze the glutathione-dependent reductive demethylation of methylcobalamin, and, with much lower efficiency, the glutathione-dependent reductive demethylation of adenosylcobalamin. Under anaerobic conditions cob(I)alamin is the first product; it is highly reactive and is converted to aquocob(II)alamin in the presence of oxygen. Binds cyanocobalamin, adenosylcobalamin, methylcobalamin and other, related vitamin B12 derivatives. The sequence is that of MMACHC-like protein (cblc-1) from Caenorhabditis elegans.